A 547-amino-acid chain; its full sequence is Probable ATP-dependent RNA helicase DDX56 (547 aa).

A Q motif motif is present at residues 7 to 35; it reads LGFEHMGLDPRLLQAVTDLGWSRPTLIQE. The Helicase ATP-binding domain occupies 38 to 218; that stretch reads IPLALEGKDL…ELILHNPVTL (181 aa). 51–58 contacts ATP; the sequence is ARTGSGKT. Position 126 is a phosphoserine (Ser126). Phosphothreonine is present on Thr141. Positions 166–169 match the DEAD box motif; the sequence is DEAD. The region spanning 230-424 is the Helicase C-terminal domain; sequence QLQQFQVVCE…PYQFRMEEIE (195 aa). Basic residues-rich tracts occupy residues 506 to 525 and 532 to 547; these read RPHK…KRAK and SFKH…AKPS. Residues 506–547 form a disordered region; that stretch reads RPHKKRKKLSSSCRKAKRAKSQNPLRSFKHKGKKFRPTAKPS. Residue Ser532 is modified to Phosphoserine.

It belongs to the DEAD box helicase family. DDX56/DBP9 subfamily. As to quaternary structure, may form homooligomeric complexes. Interacts with IRF3. Interacts with OCT4 and POU5F1. In terms of assembly, (Microbial infection) Interacts with West Nile virus capsid protein C. (Microbial infection) Interacts with foot-and-mouth disease virus protein 3A; this interaction leads to inhibition of type I interferon production. As to quaternary structure, (Microbial infection) Interacts with EMCV protein 3C; this interaction leads to inhibition of type I interferon production. In terms of tissue distribution, detected in heart, brain, liver, pancreas, placenta and lung.

The protein resides in the nucleus. The protein localises to the nucleolus. The catalysed reaction is ATP + H2O = ADP + phosphate + H(+). In terms of biological role, nucleolar RNA helicase that plays a role in various biological processes including innate immunity, ribosome biogenesis or nucleolus organization. Plays an essential role in maintaining nucleolar integrity in planarian stem cells. Maintains embryonic stem cells proliferation by conventional regulation of ribosome assembly and interaction with OCT4 and POU5F1 complex. Regulates antiviral innate immunity by inhibiting the virus-triggered signaling nuclear translocation of IRF3. Mechanistically, acts by disrupting the interaction between IRF3 and importin IPO5. May play a role in later stages of the processing of the pre-ribosomal particles leading to mature 60S ribosomal subunits. Has intrinsic ATPase activity. Functionally, (Microbial infection) Helicase activity is important for packaging viral RNA into virions during West Nile virus infection. (Microbial infection) Plays a positive role in foot-and-mouth disease virus replication by inhibiting the phosphorylation of IRF3 leading to inhibition of type I interferon. Its function is as follows. (Microbial infection) Plays a positive role in EMCV replication by interrupting IRF3 phosphorylation and its nucleus translocation. This Homo sapiens (Human) protein is Probable ATP-dependent RNA helicase DDX56 (DDX56).